We begin with the raw amino-acid sequence, 65 residues long: Large ribosomal subunit protein bL35 (65 aa).

The protein belongs to the bacterial ribosomal protein bL35 family.

In Pectobacterium atrosepticum (strain SCRI 1043 / ATCC BAA-672) (Erwinia carotovora subsp. atroseptica), this protein is Large ribosomal subunit protein bL35.